Consider the following 132-residue polypeptide: ATP synthase epsilon chain (132 aa).

Belongs to the ATPase epsilon chain family. F-type ATPases have 2 components, CF(1) - the catalytic core - and CF(0) - the membrane proton channel. CF(1) has five subunits: alpha(3), beta(3), gamma(1), delta(1), epsilon(1). CF(0) has three main subunits: a, b and c.

It localises to the cell membrane. Its function is as follows. Produces ATP from ADP in the presence of a proton gradient across the membrane. The protein is ATP synthase epsilon chain of Bacillus velezensis (strain DSM 23117 / BGSC 10A6 / LMG 26770 / FZB42) (Bacillus amyloliquefaciens subsp. plantarum).